The chain runs to 676 residues: MHAGLLGLSALLQAAEQSARLCSIVFYFATGRLLWGWLALSVLLPGFLVQALSFLWFRADGHQGQWWLAVLHLLQLGVWKRHWDSVATALWKGKEAPSWGQLHLQEADLSALRLLEALLQTGPHLLLQAYVFLASDFTDIVPGISALLSWSSLSWALVSYNRFLGIMKPGHHTMLWAALLCQQLWRMGMLGARVLSLVLFCRVYRVWVLVVGGAHWLVMTFWLVAQQSDIVESTCHWRLFNLLVGAVFILCYINFWDSPSRSRVASFYLVMLLENSILLLLATDFLQGVPGTSLWTVVGVLSGFLIGCASLVIYYSLLHPKSSDIQQSFMRKCCGPIEDNKPESEPPPRAVDPTGEMPDSSSWCQEESYELTSLDKAPSPEQNTAEVGLGEQRSGESSFFSHHHWLLLKLALKTGSVSRINAALGGDSPGCSCPPLLGSSQHCDLQRKPLFSHQDLPSSPCDPLTLEKGSEYVGAPKAEMESLETSSYLSFASELEDNATTQKPPATQEDSPKLAGSKADLAAQGKETEGPLQGKEGQESTTLYFSAAMDRTTSHQRGSPVVLRISHSETLVESRPGQPALPQAVTKPFPVTVANISPIPGRNFRPSAELPGRAPDSSECEEWKDAARDPSMQSSLPKMRLKAAEEPCFTSTPKSESIQRDYSCRDRVRQEMSFFI.

Transmembrane regions (helical) follow at residues 37 to 57 (WLAL…FLWF), 114 to 134 (LLEA…VFLA), 140 to 160 (IVPG…LVSY), 206 to 226 (VWVL…LVAQ), 239 to 259 (LFNL…WDSP), 266 to 286 (SFYL…TDFL), and 294 to 314 (LWTV…LVIY). 4 disordered regions span residues 336-362 (PIED…DSSS), 372-391 (TSLD…GLGE), 495-538 (LEDN…KEGQ), and 598-661 (PIPG…IQRD). A compositionally biased stretch (polar residues) spans 498–509 (NATTQKPPATQE).

The protein belongs to the XK family.

It is found in the cell membrane. The protein is XK-related protein 5 of Mus musculus (Mouse).